Reading from the N-terminus, the 339-residue chain is Ketol-acid reductoisomerase (NADP(+)) (339 aa).

Positions 1–182 (MRVYYDRDAD…GGGRSGVIET (182 aa)) constitute a KARI N-terminal Rossmann domain. NADP(+) contacts are provided by residues 24–27 (YGSQ), arginine 48, serine 51, threonine 53, and 83–86 (DELQ). Histidine 108 is an active-site residue. Glycine 134 is a binding site for NADP(+). Positions 183–328 (TFKEECETDL…GKLRAMMPWI (146 aa)) constitute a KARI C-terminal knotted domain. Aspartate 191, glutamate 195, glutamate 227, and glutamate 231 together coordinate Mg(2+). Residue serine 252 participates in substrate binding.

It belongs to the ketol-acid reductoisomerase family. Mg(2+) serves as cofactor.

It carries out the reaction (2R)-2,3-dihydroxy-3-methylbutanoate + NADP(+) = (2S)-2-acetolactate + NADPH + H(+). It catalyses the reaction (2R,3R)-2,3-dihydroxy-3-methylpentanoate + NADP(+) = (S)-2-ethyl-2-hydroxy-3-oxobutanoate + NADPH + H(+). The protein operates within amino-acid biosynthesis; L-isoleucine biosynthesis; L-isoleucine from 2-oxobutanoate: step 2/4. It participates in amino-acid biosynthesis; L-valine biosynthesis; L-valine from pyruvate: step 2/4. Its function is as follows. Involved in the biosynthesis of branched-chain amino acids (BCAA). Catalyzes an alkyl-migration followed by a ketol-acid reduction of (S)-2-acetolactate (S2AL) to yield (R)-2,3-dihydroxy-isovalerate. In the isomerase reaction, S2AL is rearranged via a Mg-dependent methyl migration to produce 3-hydroxy-3-methyl-2-ketobutyrate (HMKB). In the reductase reaction, this 2-ketoacid undergoes a metal-dependent reduction by NADPH to yield (R)-2,3-dihydroxy-isovalerate. The polypeptide is Ketol-acid reductoisomerase (NADP(+)) (Brucella suis (strain ATCC 23445 / NCTC 10510)).